Reading from the N-terminus, the 410-residue chain is Arginine deiminase (410 aa).

The active-site Amidino-cysteine intermediate is the Cys-399.

It belongs to the arginine deiminase family.

It localises to the cytoplasm. It catalyses the reaction L-arginine + H2O = L-citrulline + NH4(+). The protein operates within amino-acid degradation; L-arginine degradation via ADI pathway; carbamoyl phosphate from L-arginine: step 1/2. In Treponema denticola (strain ATCC 35405 / DSM 14222 / CIP 103919 / JCM 8153 / KCTC 15104), this protein is Arginine deiminase.